Reading from the N-terminus, the 678-residue chain is UvrABC system protein C (678 aa).

Basic residues predominate over residues 1-13; the sequence is MKKNISYGKHKTF. Positions 1 to 25 are disordered; the sequence is MKKNISYGKHKTFPSKLNGLEKQHS. The GIY-YIG domain maps to 69-147; it reads HKPGVYRMFD…IKRLHPRFNV (79 aa). Positions 257 to 292 constitute a UVR domain; that stretch reads QSVKNDMIQAMHKAAEDLDFEQAAVYRDRLSALSHI.

Belongs to the UvrC family. As to quaternary structure, interacts with UvrB in an incision complex.

The protein localises to the cytoplasm. Functionally, the UvrABC repair system catalyzes the recognition and processing of DNA lesions. UvrC both incises the 5' and 3' sides of the lesion. The N-terminal half is responsible for the 3' incision and the C-terminal half is responsible for the 5' incision. The polypeptide is UvrABC system protein C (Bartonella quintana (strain Toulouse) (Rochalimaea quintana)).